Consider the following 62-residue polypeptide: Alpha-conotoxin-like S1.1 (62 aa).

The N-terminal stretch at 1–21 (MGMRMMFTVFLLVVLAITVVS) is a signal peptide. Positions 22-48 (FPLDRESDGANAEARTHDHEKHALDRN) are excised as a propeptide. 2 cysteine pairs are disulfide-bonded: Cys50/Cys56 and Cys51/Cys61. Cys61 carries the post-translational modification Cysteine amide.

It belongs to the conotoxin A superfamily. In terms of tissue distribution, expressed by the venom duct.

The protein localises to the secreted. Its function is as follows. Alpha-conotoxins act on postsynaptic membranes, they bind to the nicotinic acetylcholine receptors (nAChR) and thus inhibit them. This Conus striatus (Striated cone) protein is Alpha-conotoxin-like S1.1.